A 450-amino-acid polypeptide reads, in one-letter code: Tubulin alpha chain (450 aa).

Glutamine 11 contacts GTP. At lysine 40 the chain carries N6-acetyllysine. Residues glutamate 71, serine 140, glycine 144, threonine 145, threonine 179, asparagine 206, and asparagine 228 each contribute to the GTP site. Residue glutamate 71 participates in Mg(2+) binding. The active site involves glutamate 254.

Belongs to the tubulin family. In terms of assembly, dimer of alpha and beta chains. A typical microtubule is a hollow water-filled tube with an outer diameter of 25 nm and an inner diameter of 15 nM. Alpha-beta heterodimers associate head-to-tail to form protofilaments running lengthwise along the microtubule wall with the beta-tubulin subunit facing the microtubule plus end conferring a structural polarity. Microtubules usually have 13 protofilaments but different protofilament numbers can be found in some organisms and specialized cells. It depends on Mg(2+) as a cofactor. Post-translationally, acetylation of alpha chains at Lys-40 stabilizes microtubules and affects affinity and processivity of microtubule motors. This modification has a role in multiple cellular functions, ranging from cell motility, cell cycle progression or cell differentiation to intracellular trafficking and signaling.

It localises to the cytoplasm. The protein localises to the cytoskeleton. The catalysed reaction is GTP + H2O = GDP + phosphate + H(+). In terms of biological role, tubulin is the major constituent of microtubules, a cylinder consisting of laterally associated linear protofilaments composed of alpha- and beta-tubulin heterodimers. Microtubules grow by the addition of GTP-tubulin dimers to the microtubule end, where a stabilizing cap forms. Below the cap, tubulin dimers are in GDP-bound state, owing to GTPase activity of alpha-tubulin. In Euplotoides octocarinatus (Freshwater ciliate), this protein is Tubulin alpha chain.